A 430-amino-acid polypeptide reads, in one-letter code: Serine--tRNA ligase (430 aa).

Position 237–239 (237–239) interacts with L-serine; it reads TAE. 268–270 is an ATP binding site; that stretch reads RAE. Glutamate 291 serves as a coordination point for L-serine. Position 355 to 358 (355 to 358) interacts with ATP; it reads EVSS. Serine 391 is a binding site for L-serine.

The protein belongs to the class-II aminoacyl-tRNA synthetase family. Type-1 seryl-tRNA synthetase subfamily. As to quaternary structure, homodimer. The tRNA molecule binds across the dimer.

Its subcellular location is the cytoplasm. The catalysed reaction is tRNA(Ser) + L-serine + ATP = L-seryl-tRNA(Ser) + AMP + diphosphate + H(+). The enzyme catalyses tRNA(Sec) + L-serine + ATP = L-seryl-tRNA(Sec) + AMP + diphosphate + H(+). It participates in aminoacyl-tRNA biosynthesis; selenocysteinyl-tRNA(Sec) biosynthesis; L-seryl-tRNA(Sec) from L-serine and tRNA(Sec): step 1/1. Functionally, catalyzes the attachment of serine to tRNA(Ser). Is also able to aminoacylate tRNA(Sec) with serine, to form the misacylated tRNA L-seryl-tRNA(Sec), which will be further converted into selenocysteinyl-tRNA(Sec). This chain is Serine--tRNA ligase, found in Baumannia cicadellinicola subsp. Homalodisca coagulata.